The following is a 286-amino-acid chain: Large ribosomal subunit protein uL2 (286 aa).

Disordered stretches follow at residues 22–59 (KELT…GGGH) and 215–286 (LGRR…KLHK). Residues 230–240 (DHPHGGGEGRT) show a composition bias toward basic and acidic residues. Positions 255–286 (KGGRTRQKRKPSNSSIVRRRKSRRYGQLKLHK) are enriched in basic residues.

This sequence belongs to the universal ribosomal protein uL2 family. In terms of assembly, part of the 50S ribosomal subunit. Forms a bridge to the 30S subunit in the 70S ribosome.

Functionally, one of the primary rRNA binding proteins. Required for association of the 30S and 50S subunits to form the 70S ribosome, for tRNA binding and peptide bond formation. It has been suggested to have peptidyltransferase activity; this is somewhat controversial. Makes several contacts with the 16S rRNA in the 70S ribosome. This chain is Large ribosomal subunit protein uL2, found in Rhodopirellula baltica (strain DSM 10527 / NCIMB 13988 / SH1).